Here is a 231-residue protein sequence, read N- to C-terminus: MNLVSLKDIVFGYSHTPVLDKVSLDIESGEFVGITGPNGASKSTLIKVMLGMLKPWEGTVTISKRNTEGKRLTIGYVPQQISSFNAGFPSTVLELVQSGRYTKGKWFKRLNEEDHLEVEKALKMVEMWDLRHRKIGDLSGGQKQKICIARMLASNPDLLMLDEPTTAVDYDSRKGFYEFMHHLVKNHNRTVVMVTHEQNEVQQFLDKVIRLERGEKGGWKCLTWNSCDELF.

Residues 4-230 form the ABC transporter domain; that stretch reads VSLKDIVFGY…CLTWNSCDEL (227 aa).

It belongs to the ABC transporter superfamily. In terms of assembly, the complex is composed of two ATP-binding proteins (ZnuC), two transmembrane proteins (ZnuB) and a solute-binding protein (ZnuA).

The protein resides in the cell membrane. It catalyses the reaction Zn(2+)(out) + ATP(in) + H2O(in) = Zn(2+)(in) + ADP(in) + phosphate(in) + H(+)(in). Functionally, part of the high-affinity ABC transporter complex ZnuABC involved in zinc import. Responsible for energy coupling to the transport system. ZnuABC-mediated zinc transport is required for comF expression and competence development. This Bacillus subtilis (strain 168) protein is High-affinity zinc uptake system ATP-binding protein ZnuC (znuC).